A 310-amino-acid chain; its full sequence is tRNA-cytidine(32) 2-sulfurtransferase (310 aa).

The PP-loop motif motif lies at S45 to S50. Residues C120, C123, and C211 each contribute to the [4Fe-4S] cluster site.

This sequence belongs to the TtcA family. In terms of assembly, homodimer. Requires Mg(2+) as cofactor. It depends on [4Fe-4S] cluster as a cofactor.

The protein localises to the cytoplasm. The catalysed reaction is cytidine(32) in tRNA + S-sulfanyl-L-cysteinyl-[cysteine desulfurase] + AH2 + ATP = 2-thiocytidine(32) in tRNA + L-cysteinyl-[cysteine desulfurase] + A + AMP + diphosphate + H(+). Its pathway is tRNA modification. Catalyzes the ATP-dependent 2-thiolation of cytidine in position 32 of tRNA, to form 2-thiocytidine (s(2)C32). The sulfur atoms are provided by the cysteine/cysteine desulfurase (IscS) system. The protein is tRNA-cytidine(32) 2-sulfurtransferase of Shewanella oneidensis (strain ATCC 700550 / JCM 31522 / CIP 106686 / LMG 19005 / NCIMB 14063 / MR-1).